The sequence spans 71 residues: Translational regulator CsrA (71 aa).

The protein belongs to the CsrA/RsmA family. As to quaternary structure, homodimer; the beta-strands of each monomer intercalate to form a hydrophobic core, while the alpha-helices form wings that extend away from the core.

Its subcellular location is the cytoplasm. Its function is as follows. A translational regulator that binds mRNA to regulate translation initiation and/or mRNA stability. Usually binds in the 5'-UTR at or near the Shine-Dalgarno sequence preventing ribosome-binding, thus repressing translation. Its main target seems to be the major flagellin gene, while its function is anatagonized by FliW. The protein is Translational regulator CsrA of Clostridium botulinum (strain Alaska E43 / Type E3).